The sequence spans 348 residues: MSQYKTGLLLIHPAVTTTPELVENTKAQAASKKVKFVDQFLINKLNDGSITLENAKYETVHYLTPEAQTDIKFPKKLISVLADSLKPNGSLIGLSDIYKVDALINGFEIINEPDYCWIKMDSSKLNQTVSIPLKKKKTNNTKLQSGSKLPTFKKASSSTSNLPSFKKADHSRQPIVKETDSFKPPSFKMTTEPKVYRVVDDLIEDSDDDDFSSDSSKAQYFDQVDTSDDSIEEEELIDEDGSGKSMITMITCGKSKTKKKKACKDCTCGMKEQEENEINDIRSQQDKVVKFTEDELTEIDFTIDGKKVGGCGSCSLGDAFRCSGCPYLGLPAFKPGQPINLDSISDDL.

The interval 1 to 158 (MSQYKTGLLL…LPTFKKASSS (158 aa)) is N-terminal SAM-like domain. Residues 137-170 (KTNNTKLQSGSKLPTFKKASSSTSNLPSFKKADH) form a disordered region. The segment covering 144–163 (QSGSKLPTFKKASSSTSNLP) has biased composition (polar residues). The linker stretch occupies residues 159–242 (TSNLPSFKKA…EEELIDEDGS (84 aa)). Ser-206 carries the phosphoserine modification. Residues Cys-252, Cys-263, Cys-266, and Cys-268 each contribute to the [2Fe-2S] cluster site. The tract at residues 252–268 (CGKSKTKKKKACKDCTC) is fe-S binding site A. [4Fe-4S] cluster contacts are provided by Cys-311, Cys-314, Cys-322, and Cys-325. 2 short sequence motifs (cx2C motif) span residues 311-314 (CGSC) and 322-325 (CSGC). Residues 311-325 (CGSCSLGDAFRCSGC) are fe-S binding site B.

This sequence belongs to the anamorsin family. Monomer. Interacts with TAH18. Interacts with MIA40. [2Fe-2S] cluster serves as cofactor. It depends on [4Fe-4S] cluster as a cofactor. In terms of processing, ubiquitinated.

It is found in the cytoplasm. The protein localises to the mitochondrion intermembrane space. Functionally, component of the cytosolic iron-sulfur (Fe-S) protein assembly (CIA) machinery required for the maturation of extramitochondrial Fe-S proteins. Part of an electron transfer chain functioning in an early step of cytosolic Fe-S biogenesis, facilitating the de novo assembly of a [4Fe-4S] cluster on the scaffold complex CFD1-NBP35. Electrons are transferred to DRE2 from NADPH via the FAD- and FMN-containing protein TAH18. TAH18-DRE2 are also required for the assembly of the diferric tyrosyl radical cofactor of ribonucleotide reductase (RNR), probably by providing electrons for reduction during radical cofactor maturation in the catalytic small subunit RNR2. Has anti-apoptotic effects in the cell. Involved in negative control of H(2)O(2)-induced cell death. The chain is Fe-S cluster assembly protein DRE2 from Saccharomyces cerevisiae (strain ATCC 204508 / S288c) (Baker's yeast).